The sequence spans 204 residues: Lymphotoxin-alpha (204 aa).

A signal peptide spans 1 to 33 (MTPPGRLYLLRVCSTPPLLLLGLLLALPLEAQG). The region spanning 62–204 (PAAHLVGDPS…SSVFFGAFAL (143 aa)) is the THD domain. Residue Asn-95 is glycosylated (N-linked (GlcNAc...) asparagine). Cys-119 and Cys-155 are joined by a disulfide.

This sequence belongs to the tumor necrosis factor family. As to quaternary structure, homotrimer, and heterotrimer of either two LTB and one LTA subunits or (less prevalent) two LTA and one LTB subunits. Interacts with TNFRSF14.

Its subcellular location is the secreted. It is found in the membrane. Cytokine that in its homotrimeric form binds to TNFRSF1A/TNFR1, TNFRSF1B/TNFBR and TNFRSF14/HVEM. In its heterotrimeric form with LTB binds to TNFRSF3/LTBR. Lymphotoxin is produced by lymphocytes and is cytotoxic for a wide range of tumor cells in vitro and in vivo. In Bos taurus (Bovine), this protein is Lymphotoxin-alpha (LTA).